The sequence spans 782 residues: Host cell factor homolog hcf-1 (782 aa).

Residues Met1–Lys25 form a disordered region. Basic and acidic residues predominate over residues Arg14 to Lys25. 5 Kelch repeats span residues Leu55 to Asn103, Ile105 to His151, Lys161 to Lys222, Arg227 to Leu271, and Lys280 to His324. 3 positions are modified to phosphoserine: Ser423, Ser431, and Ser449. Positions Ser423–Lys434 are enriched in polar residues. A disordered region spans residues Ser423–Trp553. Polar residues-rich tracts occupy residues Thr456–Thr469 and Thr496–Cys513. A Phosphoserine modification is found at Ser498. A compositionally biased stretch (acidic residues) spans Gly537–Pro552.

Interacts with daf-16/FOXO. Interacts with deacetylase sir-2.1. Interacts with the 14-3-3 family proteins ftt-2 and par-5. Phosphorylated at multiple serine residues. Phosphorylation is developmentally regulated, occurring in embryos but not L1 larvae. Phosphorylation may be cell-cycle-regulated.

It is found in the nucleus. Transcriptional coregulator. Involved in control of the cell cycle and in modulating mitotic histone phosphorylation. Plays a role in modulating lifespan by regulating the transcriptional activity of daf-16/Forkhead box protein O, in concert with protein deacetylase sir-2.1/SIRT1, and perhaps acting independently of the Insulin/IGF-1-like signaling (IIS) mediated pathway. Negatively modulates responses to environmental stresses, including oxidative stress, heat stress, and exposure to heavy metals; acting via regulation of the transcription factors daf-16 and skn-1. May play a role in pharyngeal development via positive modulation of expression of sup-35. This is Host cell factor homolog hcf-1 from Caenorhabditis elegans.